Reading from the N-terminus, the 350-residue chain is MKCSLRVWFLSMAFLLVFIMSLLFTYSHHSMATLPYLDSGTLGGTHRVKLVPGYTGQQRLVKEGLSGKSCTCSRCMGDAGTSEWFDSHFDSNISPVWTRDNMNLTPDVQRWWMMLQPQFKSHNTNEVLEKLFQIVPGENPYRFRDPQQCRRCAVVGNSGNLRGSGYGQEVDSHNFIMRMNQAPTVGFEKDVGSRTTHHFMYPESAKNLPANVSFVLVPFKALDLMWIASALSTGQIRFTYAPVKSFLRVDKEKVQIYNPAFFKYIHDRWTEHHGRYPSTGMLVLFFALHVCDEVNVYGFGADSRGNWHHYWENNRYAGEFRKTGVHDADFEAHIIDILAKASKIEVYRGN.

The Cytoplasmic segment spans residues 1–6; that stretch reads MKCSLR. A helical; Signal-anchor for type II membrane protein transmembrane segment spans residues 7 to 27; it reads VWFLSMAFLLVFIMSLLFTYS. At 28–350 the chain is on the lumenal side; that stretch reads HHSMATLPYL…ASKIEVYRGN (323 aa). 3 disulfides stabilise this stretch: cysteine 70-cysteine 75, cysteine 72-cysteine 149, and cysteine 152-cysteine 291. Substrate is bound by residues glutamine 116, asparagine 157, and asparagine 180. Asparagine 211 carries an N-linked (GlcNAc...) asparagine glycan. The substrate site is built by tyrosine 240, tyrosine 276, glycine 280, glycine 300, histidine 309, and histidine 326.

This sequence belongs to the glycosyltransferase 29 family. As to quaternary structure, homodimer; disulfide-linked. Homodimer formation occurs in the endoplasmic reticulum. In terms of processing, the soluble form derives from the membrane form by proteolytic processing. Post-translationally, N-glycosylated; necessary for proper exit from endoplasmic reticulum and trafficking to the Golgi apparatus.

Its subcellular location is the golgi apparatus. It is found in the golgi stack membrane. It localises to the secreted. It carries out the reaction a beta-D-galactosyl-(1-&gt;3)-N-acetyl-alpha-D-galactosaminyl derivative + CMP-N-acetyl-beta-neuraminate = an N-acetyl-alpha-neuraminyl-(2-&gt;3)-beta-D-galactosyl-(1-&gt;3)-N-acetyl-alpha-D-galactosaminyl derivative + CMP + H(+). It catalyses the reaction a ganglioside GM1 (d18:1(4E)) + CMP-N-acetyl-beta-neuraminate = a ganglioside GD1a (d18:1(4E)) + CMP + H(+). The catalysed reaction is ganglioside GM1 (d18:1(4E)/18:0) + CMP-N-acetyl-beta-neuraminate = ganglioside GD1a (18:1(4E)/18:0) + CMP + H(+). The enzyme catalyses a ganglioside GA1 + CMP-N-acetyl-beta-neuraminate = a ganglioside GM1b + CMP + H(+). It carries out the reaction a ganglioside GA1 (d18:1(4E)) + CMP-N-acetyl-beta-neuraminate = a ganglioside GM1b (d18:1(4E)) + CMP + H(+). It catalyses the reaction a globoside GalGb4Cer + CMP-N-acetyl-beta-neuraminate = a globoside MSGG + CMP + H(+). Its pathway is protein modification; protein glycosylation. It participates in glycolipid biosynthesis. In terms of biological role, a beta-galactoside alpha2-3 sialyltransferase primarily involved in terminal sialylation of ganglio and globo series glycolipids. Catalyzes the transfer of sialic acid (N-acetyl-neuraminic acid; Neu5Ac) from the nucleotide sugar donor CMP-Neu5Ac onto acceptor Galbeta-(1-&gt;3)-GalNAc-terminated glycoconjugates through an alpha2-3 linkage. Sialylates GM1/GM1a, GA1/asialo-GM1 gangliosides to form GD1a and GM1b, respectively. Together with ST3GAL3, primarily responsible for biosynthesis of brain gangliosides that function as ligand for myelin-associated glycoprotein MAG on axons, regulating MAG expression and axonal myelin stability and regeneration. Responsible for the sialylation of the pluripotent stem cell- and cancer stem cell-associated antigen SSEA3, forming SSEA4. Sialylates with low efficiency asialofetuin, presumably onto O-glycosidically linked Galbeta-(1-&gt;3)-GalNAc-O-Ser. The sequence is that of CMP-N-acetylneuraminate-beta-galactosamide-alpha-2,3-sialyltransferase 2 (St3gal2) from Rattus norvegicus (Rat).